The chain runs to 568 residues: Type 2 DNA topoisomerase 6 subunit B (568 aa).

Residues Asn46, Asp78, 99-100 (TK), 109-116 (GQQGIGIS), and Lys473 contribute to the ATP site.

This sequence belongs to the TOP6B family. Homodimer. Heterotetramer of two Top6A and two Top6B chains.

The catalysed reaction is ATP-dependent breakage, passage and rejoining of double-stranded DNA.. Functionally, relaxes both positive and negative superturns and exhibits a strong decatenase activity. The chain is Type 2 DNA topoisomerase 6 subunit B from Pyrococcus furiosus (strain ATCC 43587 / DSM 3638 / JCM 8422 / Vc1).